The chain runs to 302 residues: MGDIRKVVFEENKLEKKLCRLVGQAIGDFGMIEDGDKVMVCVSGGKDSYAMLDILMKLRERAPIDFEIVAVNLDQKQPNFPAETLPNYLRSLGIPFHIEEQDTYSIVKRVIPEGKTTCGLCSRLRRGILYRVADELGATKIALGHHRDDILETLMLNMFYAGKLKGMPPKLRSDDGKHIVIRPLAYVPEKLLERYAIDMNFPIIPCDLCGSQPNLQRQVMKEMLRDWEKKHPGRVENLFRSMHHIVPSHLMDGEAFDFKNLEISTELSGIAARSSGDRAIDEADLDELACGTMIQGTYNPSL.

The short motif at 43–48 is the PP-loop motif element; that stretch reads SGGKDS. Residues cysteine 118, cysteine 121, and cysteine 209 each contribute to the [4Fe-4S] cluster site.

It belongs to the TtcA family. Homodimer. Mg(2+) is required as a cofactor. Requires [4Fe-4S] cluster as cofactor.

The protein resides in the cytoplasm. It catalyses the reaction cytidine(32) in tRNA + S-sulfanyl-L-cysteinyl-[cysteine desulfurase] + AH2 + ATP = 2-thiocytidine(32) in tRNA + L-cysteinyl-[cysteine desulfurase] + A + AMP + diphosphate + H(+). It participates in tRNA modification. Functionally, catalyzes the ATP-dependent 2-thiolation of cytidine in position 32 of tRNA, to form 2-thiocytidine (s(2)C32). The sulfur atoms are provided by the cysteine/cysteine desulfurase (IscS) system. This is tRNA-cytidine(32) 2-sulfurtransferase from Polynucleobacter asymbioticus (strain DSM 18221 / CIP 109841 / QLW-P1DMWA-1) (Polynucleobacter necessarius subsp. asymbioticus).